The chain runs to 295 residues: Light-independent protochlorophyllide reductase iron-sulfur ATP-binding protein (295 aa).

Residues 39–44 (GIGKST) and K68 each bind ATP. S43 contacts Mg(2+). Residues C124 and C158 each contribute to the [4Fe-4S] cluster site. 209-210 (NR) contacts ATP.

Belongs to the NifH/BchL/ChlL family. In terms of assembly, homodimer. Protochlorophyllide reductase is composed of three subunits; ChlL, ChlN and ChlB. [4Fe-4S] cluster serves as cofactor.

The catalysed reaction is chlorophyllide a + oxidized 2[4Fe-4S]-[ferredoxin] + 2 ADP + 2 phosphate = protochlorophyllide a + reduced 2[4Fe-4S]-[ferredoxin] + 2 ATP + 2 H2O. It participates in porphyrin-containing compound metabolism; chlorophyll biosynthesis (light-independent). Component of the dark-operative protochlorophyllide reductase (DPOR) that uses Mg-ATP and reduced ferredoxin to reduce ring D of protochlorophyllide (Pchlide) to form chlorophyllide a (Chlide). This reaction is light-independent. The L component serves as a unique electron donor to the NB-component of the complex, and binds Mg-ATP. This is Light-independent protochlorophyllide reductase iron-sulfur ATP-binding protein from Prochlorococcus marinus (strain MIT 9215).